The sequence spans 815 residues: MDEDEKDRAKRASRNKSEKKRRDQFNVLIKELSSMLPGNTRKMDKTTVLEKVIGFLQKHNEVSAQTEISEIQQDWKPSFLSNEEFTQLMLEALDGFIIAVTTGGSIIYVSDSITPLLGHLPCDVLDQNLLNFLPEQEHSEIYKMLSSCMLMTDSASSDCLKTDNELEFYCHLLRGSLNPKEFPTYEYIKFVGNFRSYSNVPNSTCNGFDEAVPRAYRASPGKQICFVATVRLATPQFLKEMCIVEEPLEEFTSRHSLEWKFLFLDHRAPPIIGYLPFEVLGTSGYDYYHIDDLELLARCHEHLMQFGKGKSCCYRFLTKGQQWIWLQTHYYITYHQWNSKPEFIVCTHMVVSYADVRVERRQEMGLEEVSSEVVSSALKDSGSSLDPEQHFNALDIGASILSASRTPSVSSRSSPKSSHTPKSDPASTPTKLTAEASTPLQRTSSTQQDLSAHRLSQPTALQASLPSQPSCELLPQQLLPQATLQSQPAPLAQFSAQFSMFQTIKDQLEQRTRILQANIRWQQEELQKIQEQLCLVQDSSVQMFLQQPAVSLSFSNIQQPEPQPLQQRPGVISQQQLVLSPQLPGQIASPQTPSQQVLREASVISSQGPKAERSTELTTGSSRPTRSTATLFGPSTSLSRRGPGPSSGPGASAAGCSHDQQLRLLLSQPIQPMMPTSCNARHPSDLSMAGSQAKYSQNQQMFQSLEVQTSSSGSPIVLMGQAVLNQGFATTPPSQSSSLPPMQLQHQQHQQQRYLQVQTPSSLHNEQTDSLLLSSYSPQQGNMGYHQTQQQQQQQQLPRRSNSLSESSNLPQPLR.

Residues 1 to 10 (MDEDEKDRAK) are compositionally biased toward basic and acidic residues. The disordered stretch occupies residues 1-21 (MDEDEKDRAKRASRNKSEKKR). The tract at residues 1–61 (MDEDEKDRAK…VIGFLQKHNE (61 aa)) is sufficient for heterodimer formation with BMAL1, E-box binding and for the effect of NADPH. The region spanning 9 to 59 (AKRASRNKSEKKRRDQFNVLIKELSSMLPGNTRKMDKTTVLEKVIGFLQKH) is the bHLH domain. The PAS 1 domain occupies 82-152 (NEEFTQLMLE…KMLSSCMLMT (71 aa)). Residues His-119 and His-171 each contribute to the heme b site. The PAS 2 domain occupies 237–307 (FLKEMCIVEE…RCHEHLMQFG (71 aa)). The 44-residue stretch at 311 to 354 (SCCYRFLTKGQQWIWLQTHYYITYHQWNSKPEFIVCTHMVVSYA) folds into the PAC domain. Residues 405 to 420 (RTPSVSSRSSPKSSHT) show a composition bias toward low complexity. 3 disordered regions span residues 405–467 (RTPS…SLPS), 584–656 (PGQI…AAGC), and 728–815 (FATT…QPLR). 3 stretches are compositionally biased toward polar residues: residues 425-462 (PAST…TALQ), 588-608 (ASPQ…SSQG), and 616-630 (ELTT…STAT). Low complexity-rich tracts occupy residues 633–655 (GPST…SAAG) and 732–752 (PPSQ…HQQQ). The span at 753–786 (RYLQVQTPSSLHNEQTDSLLLSSYSPQQGNMGYH) shows a compositional bias: polar residues. Over residues 787 to 815 (QTQQQQQQQQLPRRSNSLSESSNLPQPLR) the composition is skewed to low complexity.

In terms of assembly, component of the circadian clock oscillator which includes the CRY proteins, CLOCK or NPAS2, BMAL1 or BMAL2, CSNK1D and/or CSNK1E, TIMELESS and the PER proteins. Efficient DNA binding requires dimerization with another bHLH protein. Forms a heterodimer with BMAL1 and this heterodimerization is required for E-box-dependent transactivation. Heme is required as a cofactor. Expressed in the retinal photoreceptor cells (at protein level). Expressed in the pineal gland and retina.

It is found in the nucleus. With respect to regulation, carbon monoxide (CO) and the redox state of the cell can modulate the transcriptional activity of the NPAS2-BMAL1 heterodimer. NADH and NADPH enhance the DNA-binding activity of the heterodimer whereas CO binds the heme group in NPAS2 and inhibits the DNA-binding activity of the heterodimer. Transcriptional activator which forms a core component of the circadian clock. The circadian clock, an internal time-keeping system, regulates various physiological processes through the generation of approximately 24 hour circadian rhythms in gene expression, which are translated into rhythms in metabolism and behavior. It is derived from the Latin roots 'circa' (about) and 'diem' (day) and acts as an important regulator of a wide array of physiological functions including metabolism, sleep, body temperature, blood pressure, endocrine, immune, cardiovascular, and renal function. Consists of two major components: the central clock, residing in the suprachiasmatic nucleus (SCN) of the brain, and the peripheral clocks that are present in nearly every tissue and organ system. Both the central and peripheral clocks can be reset by environmental cues, also known as Zeitgebers (German for 'timegivers'). The predominant Zeitgeber for the central clock is light, which is sensed by retina and signals directly to the SCN. The central clock entrains the peripheral clocks through neuronal and hormonal signals, body temperature and feeding-related cues, aligning all clocks with the external light/dark cycle. Circadian rhythms allow an organism to achieve temporal homeostasis with its environment at the molecular level by regulating gene expression to create a peak of protein expression once every 24 hours to control when a particular physiological process is most active with respect to the solar day. Transcription and translation of core clock components (CLOCK, NPAS2, BMAL1, BMAL2, PER1, PER2, PER3, CRY1 and CRY2) plays a critical role in rhythm generation, whereas delays imposed by post-translational modifications (PTMs) are important for determining the period (tau) of the rhythms (tau refers to the period of a rhythm and is the length, in time, of one complete cycle). A diurnal rhythm is synchronized with the day/night cycle, while the ultradian and infradian rhythms have a period shorter and longer than 24 hours, respectively. Disruptions in the circadian rhythms contribute to the pathology of cardiovascular diseases, cancer, metabolic syndromes and aging. A transcription/translation feedback loop (TTFL) forms the core of the molecular circadian clock mechanism. Transcription factors, CLOCK or NPAS2 and BMAL1 or BMAL2, form the positive limb of the feedback loop, act in the form of a heterodimer and activate the transcription of core clock genes and clock-controlled genes (involved in key metabolic processes), harboring E-box elements (5'-CACGTG-3') within their promoters. The core clock genes: PER1/2/3 and CRY1/2 which are transcriptional repressors form the negative limb of the feedback loop and interact with the CLOCK|NPAS2-BMAL1|BMAL2 heterodimer inhibiting its activity and thereby negatively regulating their own expression. This heterodimer also activates nuclear receptors NR1D1/2 and RORA/B/G, which form a second feedback loop and which activate and repress BMAL1 transcription, respectively. NPAS2 positively regulates the circadian expression of AANAT in the retinal photoreceptor cells. The chain is Neuronal PAS domain-containing protein 2 (NPAS2) from Gallus gallus (Chicken).